A 326-amino-acid chain; its full sequence is Zinc-dependent endopolyphosphatase (326 aa).

Topologically, residues 1 to 9 are cytoplasmic; sequence MEDKRKRRA. Residues 10–30 form a helical membrane-spanning segment; sequence ATLSTALILFVACCVYTLYIF. Residues 31-326 are Vacuolar-facing; the sequence is KFDNPRLSPP…DYELIQVQCS (296 aa). Residues Asn90 and Asn241 are each glycosylated (N-linked (GlcNAc...) asparagine).

Belongs to the metallophosphoesterase superfamily. As to quaternary structure, interacts with PPN1. The cofactor is Zn(2+). It depends on Co(2+) as a cofactor. Requires Mg(2+) as cofactor.

The protein resides in the vacuole membrane. It catalyses the reaction [phosphate](n+1) + n H2O = (n+1) phosphate + n H(+). Its activity is regulated as follows. Not sensitive to heparin inhibition. In terms of biological role, catalyzes the hydrolysis of inorganic polyphosphate (polyP) chains of many hundreds of phosphate residues into shorter lengths. Exclusively shows endopolyphosphatase activity, cleaving inside the polyP chain. Together with PPN1, responsible for a substantial fraction of polyphosphatase activity that is necessary to mobilize polyP stores in response to phosphate scarcity. This chain is Zinc-dependent endopolyphosphatase, found in Saccharomyces cerevisiae (strain ATCC 204508 / S288c) (Baker's yeast).